The sequence spans 111 residues: Entry-fusion complex protein OPG086 (111 aa).

The helical; Signal-anchor transmembrane segment at 1–21 threads the bilayer; the sequence is MASLLYFILFLLFVCISYYFT. Over 22–111 the chain is Virion surface; the sequence is YYPTNKLQAA…TLLPILLLSK (90 aa).

This sequence belongs to the orthopoxvirus OPG086 family. As to quaternary structure, interacts with OPG099/L5. Component of the entry fusion complex (EFC) composed of OPG053, OPG076, OPG086, OPG094, OPG095, OPG099, OPG107, OPG143, OPG104, OPG147 and OPG155. Except for OPG095 and OPG053, each of the EFC proteins is required for assembly or stability of the complex. Post-translationally, unglycosylated because produced in viral factories instead of the classic ER -Golgi route.

The protein resides in the virion membrane. Component of the entry fusion complex (EFC), which consists of 11 proteins. During cell infection, this complex mediates entry of the virion core into the host cytoplasm by a two-step mechanism consisting of lipid mixing of the viral and cellular membranes and subsequent pore formation. The chain is Entry-fusion complex protein OPG086 (OPG086) from Variola virus (isolate Human/India/Ind3/1967) (VARV).